Here is a 436-residue protein sequence, read N- to C-terminus: Transcriptional regulator STP3 (436 aa).

The interval 204 to 277 (EPLDDEFVPP…TKRKYTKKKQ (74 aa)) is disordered. Positions 230 to 265 (ISPPASSDSSSSSSYVPQLIPSSSSSVTSNGDSPVS) are enriched in low complexity. Positions 268-277 (TKRKYTKKKQ) are enriched in basic residues. A C2H2-type zinc finger spans residues 315–337 (FDCPSCDASFKVKGYLTRHLKKH).

Post-translationally, activated by the amino acid-induced proteolytic removal of an N-terminal inhibitory domain.

It localises to the cell membrane. Its subcellular location is the nucleus. Its function is as follows. Transcription factor that activates genes required for degradation of extracellular protein and uptake of peptides such as the secreted aspartyl protease SAP2 or the oligopeptide transporter OPT1. Required for virulence. Synthesized as latent cytoplasmic precursor, which, upon a signal initiated by the plasma membrane SPS amino acid sensor system (including CSY1 and CSH3), becomes proteolytically activated and relocates to the nucleus, where it induces the expression of SPS-sensor-regulated genes. The protein is Transcriptional regulator STP3 (STP3) of Candida albicans (strain SC5314 / ATCC MYA-2876) (Yeast).